The sequence spans 117 residues: Fluoride-specific ion channel FluC 2 (117 aa).

Helical transmembrane passes span 1–21 (MISI…RSAI) and 46–66 (FLIG…AFFV). The Na(+) site is built by glycine 71 and threonine 74. The helical transmembrane segment at 95-115 (LFLNYSLLQFIIGFIACYIGY) threads the bilayer.

The protein belongs to the fluoride channel Fluc/FEX (TC 1.A.43) family.

The protein localises to the cell membrane. It catalyses the reaction fluoride(in) = fluoride(out). Its activity is regulated as follows. Na(+) is not transported, but it plays an essential structural role and its presence is essential for fluoride channel function. In terms of biological role, fluoride-specific ion channel. Important for reducing fluoride concentration in the cell, thus reducing its toxicity. The protein is Fluoride-specific ion channel FluC 2 of Staphylococcus aureus (strain MSSA476).